The sequence spans 62 residues: uncharacterized protein (62 aa).

This is an uncharacterized protein from Caenorhabditis elegans.